The primary structure comprises 377 residues: Palmitoyltransferase ZDHHC16 (377 aa).

Topologically, residues 1–77 are cytoplasmic; it reads MRGQRSLLLG…VYWLVDNVIR (77 aa). Residues 78–98 traverse the membrane as a helical segment; it reads WFGVVFVVLVIVLTGSIVAIA. Residues 99 to 116 lie on the Lumenal side of the membrane; it reads YLCVLPLILRTYSVPRLC. A helical membrane pass occupies residues 117-137; the sequence is WHFFYSHWNLILIVFHYYQAI. The Cytoplasmic segment spans residues 138–198; the sequence is TTPPGYPPQG…NNCVGHYNHR (61 aa). The 51-residue stretch at 155 to 205 folds into the DHHC domain; the sequence is SICKKCIYPKPARTHHCSICNRCVLKMDHHCPWLNNCVGHYNHRYFFSFCF. Catalysis depends on C185, which acts as the S-palmitoyl cysteine intermediate. Residues 199-219 traverse the membrane as a helical segment; that stretch reads YFFSFCFFMTLGCVYCSYGSW. Residues 220–266 lie on the Lumenal side of the membrane; the sequence is DLFREAYAAIEKMKQLDKNKLQAVANQTYHQTPPPTFSFRERMTHKS. The helical transmembrane segment at 267-287 threads the bilayer; the sequence is LVYLWFLCSSVALALGALTVW. At 288–377 the chain is on the cytoplasmic side; the sequence is HAVLISRGET…TAHSASVMAV (90 aa).

The protein belongs to the DHHC palmitoyltransferase family. As to quaternary structure, interacts with ABL1. Interacts with COPS5/JAB1. Widely expressed.

The protein resides in the endoplasmic reticulum membrane. The enzyme catalyses L-cysteinyl-[protein] + hexadecanoyl-CoA = S-hexadecanoyl-L-cysteinyl-[protein] + CoA. Palmitoyl acyltransferase that mediates palmitoylation of proteins such as PLN and ZDHHC6. Required during embryonic heart development and cardiac function, possibly by mediating palmitoylation of PLN, thereby affecting PLN phosphorylation and homooligomerization. Also required for eye development. Palmitoylates ZDHHC6, affecting the quaternary assembly of ZDHHC6, its localization, stability and function. May play a role in DNA damage response. May be involved in apoptosis regulation. Involved in the proliferation of neural stem cells by regulating the FGF/ERK pathway. The protein is Palmitoyltransferase ZDHHC16 of Homo sapiens (Human).